Consider the following 452-residue polypeptide: Ethanolamine kinase 1 (452 aa).

Positions 26–64 (AVQTRIGNSAASRRSPAARPPVPAPPALPRGRPGTEGST) are disordered. The segment covering 43-53 (ARPPVPAPPAL) has biased composition (pro residues).

The protein belongs to the choline/ethanolamine kinase family. As to expression, expressed in kidney, liver, placenta, heart, leukocyte, ovary and testis.

The protein resides in the cytoplasm. It catalyses the reaction ethanolamine + ATP = phosphoethanolamine + ADP + H(+). It functions in the pathway phospholipid metabolism; phosphatidylethanolamine biosynthesis; phosphatidylethanolamine from ethanolamine: step 1/3. In terms of biological role, highly specific for ethanolamine phosphorylation. May be a rate-controlling step in phosphatidylethanolamine biosynthesis. The polypeptide is Ethanolamine kinase 1 (Homo sapiens (Human)).